A 354-amino-acid polypeptide reads, in one-letter code: Histidinol-phosphate aminotransferase (354 aa).

Residue K222 is modified to N6-(pyridoxal phosphate)lysine.

The protein belongs to the class-II pyridoxal-phosphate-dependent aminotransferase family. Histidinol-phosphate aminotransferase subfamily. Homodimer. The cofactor is pyridoxal 5'-phosphate.

It catalyses the reaction L-histidinol phosphate + 2-oxoglutarate = 3-(imidazol-4-yl)-2-oxopropyl phosphate + L-glutamate. It functions in the pathway amino-acid biosynthesis; L-histidine biosynthesis; L-histidine from 5-phospho-alpha-D-ribose 1-diphosphate: step 7/9. The chain is Histidinol-phosphate aminotransferase from Leuconostoc citreum (strain KM20).